The chain runs to 197 residues: Probable GTP-binding protein EngB (197 aa).

In terms of domain architecture, EngB-type G spans 22 to 194 (DLPEIAFAGR…LETIARMTGI (173 aa)). GTP-binding positions include 30–37 (GRSNVGKS), 57–61 (GKTRL), 75–78 (DLPG), 142–145 (TKAD), and 173–175 (FST). Mg(2+)-binding residues include Ser37 and Thr59.

The protein belongs to the TRAFAC class TrmE-Era-EngA-EngB-Septin-like GTPase superfamily. EngB GTPase family. Mg(2+) serves as cofactor.

In terms of biological role, necessary for normal cell division and for the maintenance of normal septation. The protein is Probable GTP-binding protein EngB of Desulfosudis oleivorans (strain DSM 6200 / JCM 39069 / Hxd3) (Desulfococcus oleovorans).